An 833-amino-acid chain; its full sequence is Probable glucan 1,3-beta-glucosidase D (833 aa).

The segment covering 1 to 33 (MPTHSRSRDRYGGRDSDREARYDYDYARRRYAT) has biased composition (basic and acidic residues). A disordered region spans residues 1-228 (MPTHSRSRDR…RKRQKKLAVV (228 aa)). At 1–305 (MPTHSRSRDR…GGRPFWKRKR (305 aa)) the chain is on the cytoplasmic side. Residues 34 to 45 (DDDDDYDDDELE) show a composition bias toward acidic residues. 2 stretches are compositionally biased toward basic and acidic residues: residues 46–75 (HDLT…RDAE) and 97–172 (YGDD…ETAA). Residues 183-196 (SASHLLSADALAKL) show a composition bias toward low complexity. The segment covering 200–217 (YEKEERRKREIAKDAAKA) has biased composition (basic and acidic residues). Residues 306–326 (WIGLGALIIILVIVIPVAVVV) traverse the membrane as a helical; Signal-anchor for type II membrane protein segment. Residues 327–833 (SKKHDNKSDP…PDFGDLPEYY (507 aa)) lie on the Extracellular side of the membrane. Residues 331 to 353 (DNKSDPADSQGTSPGKSNLDGLS) are disordered. Asparagine 332 carries an N-linked (GlcNAc...) asparagine glycan. Over residues 337–346 (ADSQGTSPGK) the composition is skewed to polar residues. N-linked (GlcNAc...) asparagine glycans are attached at residues asparagine 378, asparagine 383, asparagine 395, asparagine 548, asparagine 560, and asparagine 569. The active-site Proton donor is the glutamate 599. 3 N-linked (GlcNAc...) asparagine glycosylation sites follow: asparagine 638, asparagine 671, and asparagine 691. Catalysis depends on glutamate 704, which acts as the Nucleophile.

This sequence belongs to the glycosyl hydrolase 5 (cellulase A) family.

The protein localises to the cell membrane. The enzyme catalyses Successive hydrolysis of beta-D-glucose units from the non-reducing ends of (1-&gt;3)-beta-D-glucans, releasing alpha-glucose.. Functionally, glucosidase involved in the degradation of cellulosic biomass. Active on lichenan. The protein is Probable glucan 1,3-beta-glucosidase D (exgD) of Aspergillus fumigatus (strain CBS 144.89 / FGSC A1163 / CEA10) (Neosartorya fumigata).